The following is an 89-amino-acid chain: Small ribosomal subunit protein uS15 (89 aa).

This sequence belongs to the universal ribosomal protein uS15 family. Part of the 30S ribosomal subunit. Forms a bridge to the 50S subunit in the 70S ribosome, contacting the 23S rRNA.

In terms of biological role, one of the primary rRNA binding proteins, it binds directly to 16S rRNA where it helps nucleate assembly of the platform of the 30S subunit by binding and bridging several RNA helices of the 16S rRNA. Its function is as follows. Forms an intersubunit bridge (bridge B4) with the 23S rRNA of the 50S subunit in the ribosome. The sequence is that of Small ribosomal subunit protein uS15 from Kocuria rhizophila (strain ATCC 9341 / DSM 348 / NBRC 103217 / DC2201).